The chain runs to 519 residues: Circadian clock oscillator protein KaiC 1 (519 aa).

KaiC domains lie at 1–248 and 262–519; these read MNLP…INIF and ARIS…KTAE. Residues Gly-50, Thr-51, Gly-52, Lys-53, Thr-54, Leu-55, Ser-90, Lys-225, Leu-226, Arg-227, Thr-229, His-231, Thr-241, Thr-291, Gly-292, Thr-293, Gly-294, Lys-295, Thr-296, and Leu-297 each contribute to the ATP site. Thr-54 serves as a coordination point for Mg(2+). A Mg(2+)-binding site is contributed by Thr-296. Mg(2+) is bound at residue Glu-319. Trp-332 is a binding site for ATP. Ser-432 carries the phosphoserine; by autocatalysis modification. Position 433 is a phosphothreonine; by autocatalysis (Thr-433). Residues Arg-452, Lys-458, Met-459, Arg-460, Ser-462, His-464, and Lys-466 each coordinate ATP.

This sequence belongs to the KaiC family. As to quaternary structure, homohexamer; hexamerization is dependent on ATP-binding. Core component of the KaiABC complex, at least composed of a KaiC homohexamer, a KaiB dimer and two KaiA dimers. Interacts directly with SasA. Multimerizes, probably forming homohexamers, no interaction with KaiC2 or KaiC3 is seen. Interacts with KaiA. In another study interacts with itself, KaiB1, KaiB3 and KaiC3. Interacts with SasA (hik8). Requires Mg(2+) as cofactor. Phosphorylated on serine and threonine residues by autocatalysis. Has a 4 step phosphorylation cycle; the autokinase acts first on Thr-433, then Ser-432. When Ser-432 is modified KaiC switches to an autophosphatase mode, acting first on phospho-Thr-433 then phospho-Ser-432.

It carries out the reaction L-seryl-[protein] + ATP = O-phospho-L-seryl-[protein] + ADP + H(+). It catalyses the reaction L-threonyl-[protein] + ATP = O-phospho-L-threonyl-[protein] + ADP + H(+). The catalysed reaction is ATP + H2O = ADP + phosphate + H(+). With respect to regulation, the interaction with KaiA enhances its phosphorylation status, while the interaction with KaiB decreases it. Its function is as follows. Component of the oscillator and circadian clock in this organism, enhances fitness in a rhythmic environment. Autophosphorylates in the presence of KaiA, no activity is seen in its absence. Central component of the KaiABC oscillator complex, which constitutes the main circadian regulator in cyanobacteria. Complex composition changes during the circadian cycle to control KaiC phosphorylation. KaiA stimulates KaiC autophosphorylation, while KaiB sequesters KaiA, leading to KaiC autodephosphorylation. Clock output pathways impact the RpaA transcriptional regulator. KaiC enhances the autophosphorylation activity of SasA, which then transfers its phosphate group to RpaA to activate it. KaiB and KaiC together enhance the phospho-RpaA dephosphatase activity of CikA. In terms of biological role, has a weak, temperature-independent ATPase activity; ATPase activity defines the circadian period. The phosphorylation state of KaiC modulates its ATPase activity and effects KaiB binding. This is Circadian clock oscillator protein KaiC 1 from Synechocystis sp. (strain ATCC 27184 / PCC 6803 / Kazusa).